Reading from the N-terminus, the 439-residue chain is Sequestosome-1 (439 aa).

Position 2 is an N-acetylalanine (Ala2). Residues 2-48 (ASLTVKAYLLGKEEAAREIRRFSFCFSPEPEAEAAAGPGPCERLLSR) are interaction with LCK. Positions 3 to 100 (SLTVKAYLLG…DIFRIYIKEK (98 aa)) constitute a PB1 domain. At Ser24 the chain carries Phosphoserine. The interval 41–105 (PCERLLSRVA…YIKEKKECRR (65 aa)) is interaction with PRKCZ and dimerization. An interaction with PAWR region spans residues 48–78 (RVAVLFPALRPGGFQAHYRDEDGDLVAFSSD). Positions 119-221 (VHPNVICDGC…DGRPCPTAES (103 aa)) are interaction with GABRR3. Residues 120–170 (HPNVICDGCNGPVVGTRYKCSVCPDYDLCSVCEGKGLHREHSKLIFPNPFG) form a ZZ-type zinc finger. Zn(2+) contacts are provided by Cys125, Cys128, Cys139, and Cys142. Position 145 is a phosphotyrosine (Tyr145). Residues Cys148, Cys151, His157, and His160 each contribute to the Zn(2+) site. Positions 167–217 (NPFGHLSDSFSHSRWLRKLKHGHFGWPGWEMGPPGNWSPRPPRAGDGRPCP) are LIM protein-binding. Phosphoserine occurs at positions 173, 175, and 204. A disordered region spans residues 201–231 (GNWSPRPPRAGDGRPCPTAESASAPSEDPNV). A TRAF6-binding motif is present at residues 225-230 (PSEDPN). A phosphoserine mark is found at Ser246 and Ser263. The disordered stretch occupies residues 259–389 (GGKRSRLTPT…ALYPHLPPEA (131 aa)). The segment covering 265–292 (LTPTSAESSSTGTEDKSGTQPSSCSSEV) has biased composition (polar residues). A Phosphothreonine modification is found at Thr266. An interaction with NTRK1 region spans residues 266-439 (TPTSAESSST…IQYSKHPPPL (174 aa)). Ser269 and Ser281 each carry phosphoserine. Cys288 is lipidated: S-palmitoyl cysteine. Phosphoserine is present on residues Ser305, Ser327, and Ser331. Residues 320–341 (QPEELMESDNCSGGDDDWTHLS) form an MAP1LC3B-binding region. Positions 335–340 (DDWTHL) match the LIR motif. A compositionally biased stretch (basic and acidic residues) spans 336 to 346 (DWTHLSSKEVD). Residues 346–351 (DPSTGE) form an interaction with KEAP1 region. A phosphoserine mark is found at Ser348, Ser354, Ser360, Ser364, and Ser365. The segment covering 350-372 (GELQSLQMPESEGPSSLDPSQEG) has biased composition (polar residues). In terms of domain architecture, UBA spans 388 to 433 (EADPRLIESLSQMLSMGFSDEGGWLTRLLQTKNYDIGAALDTIQYS). Phosphoserine; by ULK1 and TBK1 is present on Ser402. Ser406 is subject to Phosphoserine. An N6-acetyllysine; alternate mark is found at Lys419 and Lys434. Lys419 is covalently cross-linked (Glycyl lysine isopeptide (Lys-Gly) (interchain with G-Cter in ubiquitin); alternate). Residue Lys434 forms a Glycyl lysine isopeptide (Lys-Gly) (interchain with G-Cter in SUMO2); alternate linkage.

As to quaternary structure, homooligomer or heterooligomer; may form homotypic arrays. Dimerization interferes with ubiquitin binding. Component of a ternary complex with PAWR and PRKCZ. Forms a complex with JUB/Ajuba, PRKCZ and TRAF6. Identified in a complex with TRAF6 and CYLD. Identified in a heterotrimeric complex with ubiquitin and ZFAND5, where ZFAND5 and SQSTM1 both interact with the same ubiquitin molecule. Interacts (via LIR motif) with MAP1LC3A and MAP1LC3B, as well as with other ATG8 family members, including GABARAP, GABARAPL1 and GABARAPL2; these interactions are necessary for the recruitment MAP1 LC3 family members to inclusion bodies containing polyubiquitinated protein aggregates and for their degradation by autophagy. Interacts directly with PRKCI and PRKCZ. Interacts with EBI3, LCK, RASA1, NR2F2, NTRK1, NTRK2, NTRK3, NBR1, MAP2K5 and MAPKAPK5. Upon TNF-alpha stimulation, interacts with RIPK1 probably bridging IKBKB to the TNF-R1 complex composed of TNF-R1/TNFRSF1A, TRADD and RIPK1. Interacts with the proteasome subunits PSMD4 and PSMC2. Interacts with TRAF6. Interacts with 'Lys-63'-linked polyubiquitinated MAPT/TAU. Interacts with FHOD3. Interacts with CYLD. Interacts with SESN1. Interacts with SESN2. Interacts with ULK1. Interacts with UBD. Interacts with WDR81; the interaction is direct and regulates the interaction of SQSTM1 with ubiquitinated proteins. Interacts with WDFY3; this interaction is required to recruit WDFY3 to cytoplasmic bodies and to PML bodies. Interacts with LRRC25. Interacts with STING1; leading to relocalization of STING1 to autophagosomes. Interacts (when phosphorylated at Ser-348) with KEAP1; the interaction is direct and inactivates the BCR(KEAP1) complex by sequestering KEAP1 in inclusion bodies, promoting its degradation. Interacts with MOAP1; promoting dissociation of SQSTM1 inclusion bodies that sequester KEAP1. Interacts with GBP1. Interacts with TAX1BP1. Interacts with (ubiquitinated) PEX5; specifically binds PEX5 ubiquitinated at 'Lys-209' in response to reactive oxygen species (ROS). Interacts (via PB1 domain) with TNS2; the interaction leads to sequestration of TNS2 in cytoplasmic aggregates with SQSTM1 and promotes TNS2 ubiquitination and proteasomal degradation. Interacts with IRS1; the interaction is disrupted by the presence of tensin TNS2. Interacts with TRIM5. Interacts with TRIM11 (when ubiquitinated); promoting AIM2 recruitment to autophagosomes and autophagy-dependent degradation of AIM2. Interacts with TRIM13. Interacts with TRIM16. Interacts with TRIM23. Interacts with TRIM50. Interacts with TRIM55. Interacts with ECSIT; this interaction inhibits TLR4 signaling via functional regulation of the TRAF6-ECSIT complex. Interacts with GABRR1, GABRR2 and GABRR3. Interacts with WDR83. Interacts with GRB2. Interacts with USP12; the interaction is independent of USP12 deubiquitinase activity and may be involved in regulation of autophagic flux. Interacts with ASB6. Phosphorylated. Phosphorylation at Ser-406 by ULK1 destabilizes the UBA dimer interface and increases binding affinity to ubiquitinated proteins. Phosphorylation at Ser-406 also primes for subsequent phosphorylation at Ser-402. Phosphorylation at Ser-402 by CK2 or ULK1 promotes binding to ubiquitinated proteins by increasing the affinity between the UBA domain and polyubiquitin chains. Phosphorylation at Ser-402 by ULK1 is stimulated by SESN2. Phosphorylated at Ser-402 by TBK1, leading to promote relocalization of 'Lys-63'-linked ubiquitinated STING1 to autophagosomes. Phosphorylation at Ser-348 by ULK1 promotes interaction with KEAP1 and inactivation of the BCR(KEAP1) complex, promoting NFE2L2/NRF2 nuclear accumulation and expression of phase II detoxifying enzymes. Phosphorylated in vitro by TTN. In terms of processing, ubiquitinated by UBE2J1 and RNF26 at Lys-434: ubiquitinated SQSTM1 attracts specific vesicle-associated adapters, forming a molecular bridge that restrains cognate vesicles in the perinuclear region and organizes the endosomal pathway for efficient cargo transport. Ubiquitination by UBE2D2 and UBE2D3 increases its ability to bind polyubiquitin chains by destabilizing the UBA dimer interface. Deubiquitination by USP15 releases target vesicles for fast transport into the cell periphery. Ubiquitinated by the BCR(KEAP1) complex at Lys-419, increasing SQSTM1 sequestering activity and promoting its degradation. Ubiquitinated via 'Lys-29' and 'Lys-33'-linked polyubiquitination leading to xenophagic targeting of bacteria and inhibition of their replication. Post-translationally, acetylated at Lys-419 and Lys-434 by KAT5/TIP60, promotes activity by destabilizing the UBA dimer interface and increases binding affinity to ubiquitinated proteins. Deacetylated by HDAC6. Palmitoylation at Cys-288 by ZDHHC19 is required for efficient autophagic degradation of SQSTM1-cargo complexes by promoting affinity for ATG8 proteins and recruitment of p62 bodies to autophagosomes. Dealmitoylated at Cys-288 by LYPLA1. As to expression, ubiquitously expressed. In brain, mainly expressed by neurons, especially pyramidal neurons in the cerebral cortex and hippocampus. Also expressed by Purkinje cells and neurons in the dentate nucleus of the cerebellum and neurons of the basal ganglia (at protein level).

The protein localises to the cytoplasmic vesicle. It is found in the autophagosome. The protein resides in the preautophagosomal structure. It localises to the cytoplasm. Its subcellular location is the cytosol. The protein localises to the nucleus. It is found in the PML body. The protein resides in the late endosome. It localises to the lysosome. Its subcellular location is the endoplasmic reticulum. The protein localises to the myofibril. It is found in the sarcomere. Functionally, molecular adapter required for selective macroautophagy (aggrephagy) by acting as a bridge between polyubiquitinated proteins and autophagosomes. Promotes the recruitment of ubiquitinated cargo proteins to autophagosomes via multiple domains that bridge proteins and organelles in different steps. SQSTM1 first mediates the assembly and removal of ubiquitinated proteins by undergoing liquid-liquid phase separation upon binding to ubiquitinated proteins via its UBA domain, leading to the formation of insoluble cytoplasmic inclusions, known as p62 bodies. SQSTM1 then interacts with ATG8 family proteins on autophagosomes via its LIR motif, leading to p62 body recruitment to autophagosomes, followed by autophagic clearance of ubiquitinated proteins. SQSTM1 is itself degraded along with its ubiquitinated cargos. Also required to recruit ubiquitinated proteins to PML bodies in the nucleus. Also involved in autophagy of peroxisomes (pexophagy) in response to reactive oxygen species (ROS) by acting as a bridge between ubiquitinated PEX5 receptor and autophagosomes. Acts as an activator of the NFE2L2/NRF2 pathway via interaction with KEAP1: interaction inactivates the BCR(KEAP1) complex by sequestering the complex in inclusion bodies, promoting nuclear accumulation of NFE2L2/NRF2 and subsequent expression of cytoprotective genes. Promotes relocalization of 'Lys-63'-linked ubiquitinated STING1 to autophagosomes. Involved in endosome organization by retaining vesicles in the perinuclear cloud: following ubiquitination by RNF26, attracts specific vesicle-associated adapters, forming a molecular bridge that restrains cognate vesicles in the perinuclear region and organizes the endosomal pathway for efficient cargo transport. Sequesters tensin TNS2 into cytoplasmic puncta, promoting TNS2 ubiquitination and proteasomal degradation. May regulate the activation of NFKB1 by TNF-alpha, nerve growth factor (NGF) and interleukin-1. May play a role in titin/TTN downstream signaling in muscle cells. Adapter that mediates the interaction between TRAF6 and CYLD. In terms of biological role, more potent than isoform 2 to stimulate PRKCZ-dependent phosphorylation of KCNAB2. This chain is Sequestosome-1 (Sqstm1), found in Rattus norvegicus (Rat).